The primary structure comprises 169 residues: Large ribosomal subunit protein uL5 (169 aa).

Belongs to the universal ribosomal protein uL5 family. Part of the 50S ribosomal subunit; contacts the 5S rRNA and probably tRNA. Forms a bridge to the 30S subunit in the 70S ribosome.

Functionally, this is one of the proteins that bind and probably mediate the attachment of the 5S RNA into the large ribosomal subunit, where it forms part of the central protuberance. In the 70S ribosome it contacts protein S13 of the 30S subunit (bridge B1b), connecting the 2 subunits; this bridge is implicated in subunit movement. May contact the P site tRNA; the 5S rRNA and some of its associated proteins might help stabilize positioning of ribosome-bound tRNAs. In Methanococcoides burtonii (strain DSM 6242 / NBRC 107633 / OCM 468 / ACE-M), this protein is Large ribosomal subunit protein uL5.